We begin with the raw amino-acid sequence, 104 residues long: N(4)-acetylcytidine amidohydrolase (104 aa).

One can recognise an ASCH domain in the interval 7–93; that stretch reads MTFFSRFEAD…EVIQEIYPGI (87 aa). The active-site Proton acceptor is the K22. Catalysis depends on T25, which acts as the Nucleophile. The active-site Proton donor is the E75.

It belongs to the N(4)-acetylcytidine amidohydrolase family.

The catalysed reaction is N(4)-acetylcytidine + H2O = cytidine + acetate + H(+). The enzyme catalyses N(4)-acetyl-2'-deoxycytidine + H2O = 2'-deoxycytidine + acetate + H(+). It catalyses the reaction N(4)-acetylcytosine + H2O = cytosine + acetate + H(+). Catalyzes the hydrolysis of N(4)-acetylcytidine (ac4C). The sequence is that of N(4)-acetylcytidine amidohydrolase from Vibrio vulnificus (strain YJ016).